Here is a 500-residue protein sequence, read N- to C-terminus: Probable malate:quinone oxidoreductase (500 aa).

It belongs to the MQO family. Requires FAD as cofactor.

The enzyme catalyses (S)-malate + a quinone = a quinol + oxaloacetate. It functions in the pathway carbohydrate metabolism; tricarboxylic acid cycle; oxaloacetate from (S)-malate (quinone route): step 1/1. The polypeptide is Probable malate:quinone oxidoreductase (Halalkalibacterium halodurans (strain ATCC BAA-125 / DSM 18197 / FERM 7344 / JCM 9153 / C-125) (Bacillus halodurans)).